The chain runs to 72 residues: uncharacterized protein (72 aa).

This is an uncharacterized protein from Escherichia coli (Bacteriophage T4).